We begin with the raw amino-acid sequence, 109 residues long: MAGALVRKAADYVRSKDFRDYLMSTHFWGPVANWGLPIAAINDMKKSPEIISGRMTFALCCYSLTFMRFAYKVQPRNWLLFACHVTNEVAQLIQGGRLINYEMSKRPSA.

At A2 the chain carries N-acetylalanine. Topologically, residues 2–20 are mitochondrial matrix; sequence AGALVRKAADYVRSKDFRD. The chain crosses the membrane as a helical span at residues 21 to 41; it reads YLMSTHFWGPVANWGLPIAAI. The Mitochondrial intermembrane segment spans residues 42–52; it reads NDMKKSPEIIS. A helical transmembrane segment spans residues 53–71; the sequence is GRMTFALCCYSLTFMRFAY. N6-acetyllysine is present on K72. The Mitochondrial matrix portion of the chain corresponds to 72-109; that stretch reads KVQPRNWLLFACHVTNEVAQLIQGGRLINYEMSKRPSA.

The protein belongs to the mitochondrial pyruvate carrier (MPC) (TC 2.A.105) family. Homodimer. Forms heterodimer with MPC2. The heterodimer is the more stable and dominant form.

The protein localises to the mitochondrion inner membrane. The enzyme catalyses pyruvate(out) + H(+)(out) = pyruvate(in) + H(+)(in). Functionally, mediates the uptake of pyruvate into mitochondria. The polypeptide is Mitochondrial pyruvate carrier 1 (Mpc1) (Mus musculus (Mouse)).